Consider the following 419-residue polypeptide: Pygopus homolog 1 (419 aa).

Disordered stretches follow at residues 1-64 and 175-338; these read MPAE…PNSD and HFRQ…SSSD. Positions 18–30 are enriched in gly residues; sequence GDSGLDGLGGPGV. The Nuclear localization signal signature appears at 35–41; the sequence is PDKKKRK. Polar residues-rich tracts occupy residues 175 to 221 and 240 to 255; these read HFRQ…SNHS and DFTQGATKNTNQNSSA. Low complexity predominate over residues 276 to 286; it reads VNRNNAVNQEN. The span at 287–307 shows a compositional bias: polar residues; sequence SRSSSTEATNNNPANGTQNKP. The PHD-type zinc finger occupies 340–398; sequence VYPCGICTNEVNDDQDAILCEASCQKWFHRICTGMTETAYGLLTAEASAVWGCDTCMAD. The interval 341 to 388 is interaction with H3K4me2; it reads YPCGICTNEVNDDQDAILCEASCQKWFHRICTGMTETAYGLLTAEASA. Residues 373–391 form an interaction with BCL9 region; that stretch reads GMTETAYGLLTAEASAVWG.

As to quaternary structure, interacts with BCL9 via The PHD-type zinc finger motiv, and thereby becomes part of the nuclear beta-catenin/TCF complex. Identified in a complex with BCL9L, CDC73, CTNNB1 and PYGO1. Interacts with histone H3 mono-, di- or tri-methylated at 'Lys4' (H3K4me1, H3K4me2, H3K4me3); the interaction is enhanced by the interaction with BCL9.

It is found in the nucleus. Functionally, involved in signal transduction through the Wnt pathway. The sequence is that of Pygopus homolog 1 (PYGO1) from Homo sapiens (Human).